A 434-amino-acid chain; its full sequence is Forkhead box protein A2 (434 aa).

Residues 149 to 243 (KPPYSYISLI…ENGCYLRRQK (95 aa)) constitute a DNA-binding region (fork-head). The span at 249-262 (KKPSLREGGGKKLS) shows a compositional bias: basic and acidic residues. The segment at 249-339 (KKPSLREGGG…VLSHEAQSHL (91 aa)) is disordered. Composition is skewed to low complexity over residues 263–291 (EGSS…SSSP) and 317–333 (ASQA…VLSH).

The protein resides in the nucleus. In terms of biological role, acts as a transcriptional activator during early development, limiting the extent of mesoderm formation in the gastrula. Binds to DNA via the target sequence 5'-GT[AC]AACA-3', with 5'-GTAAACA-3' being the preferred binding site. The sequence is that of Forkhead box protein A2 from Xenopus tropicalis (Western clawed frog).